The primary structure comprises 908 residues: Transferrin-binding protein A (908 aa).

An N-terminal signal peptide occupies residues 1 to 24 (MQQQHLFRLNILCLSLMTALPVYA). The short motif at 38-45 (DTIQVKAK) is the TonB box element. Positions 51–176 (RDNEVTGLGK…LAGSVAFQTK (126 aa)) constitute a TBDR plug domain. The 722-residue stretch at 187 to 908 (QWGIQSKTAY…NYTFSLEMKF (722 aa)) folds into the TBDR beta-barrel domain. Positions 891-908 (NRYAAPGRNYTFSLEMKF) match the TonB C-terminal box motif.

This sequence belongs to the TonB-dependent receptor family. As to quaternary structure, binds both human apo- and holo-transferrin (TF), via the TF C-terminus. Forms a large complex with TF and TbpB.

The protein resides in the cell outer membrane. Neisseria acquires iron by extracting it from serum transferrin (TF) in its human host. Acts as a TF receptor and is required for TF utilization. Binds both apo- and holo-TF, via the TF C-terminus. The chain is Transferrin-binding protein A from Neisseria meningitidis serogroup B.